A 145-amino-acid chain; its full sequence is Cytochrome c550 (145 aa).

Residues 1-24 (MNKNNVLRGLLVLAGLSLSSLALA) form the signal peptide. One can recognise a Cytochrome c domain in the interval 60 to 142 (LAVEIGASAY…AIRSYLESVH (83 aa)). The heme c site is built by Cys-73, Cys-76, His-77, and Met-119.

In terms of assembly, monomer. Interacts with the quinoprotein ethanol dehydrogenase (QEDH) ExaA. Binds 1 heme group per subunit.

The protein resides in the periplasm. Its pathway is alcohol metabolism; ethanol degradation; acetate from ethanol. Is an essential component of the ethanol oxidation system that allows P.aeruginosa to grow on ethanol as the sole carbon and energy source. Is the direct electron acceptor of the quinoprotein ethanol dehydrogenase (QEDH). This is Cytochrome c550 from Pseudomonas aeruginosa (strain ATCC 15692 / DSM 22644 / CIP 104116 / JCM 14847 / LMG 12228 / 1C / PRS 101 / PAO1).